The chain runs to 318 residues: Lipoyl synthase 1 (318 aa).

Residues 6 to 32 are disordered; the sequence is DTISNPLRPRHPEKVNRPDSASPPKPD. [4Fe-4S] cluster-binding residues include cysteine 60, cysteine 65, cysteine 71, cysteine 86, cysteine 90, cysteine 93, and serine 299. One can recognise a Radical SAM core domain in the interval 72-288; that stretch reads WDKKHATFMI…EKVAYTKGFL (217 aa).

This sequence belongs to the radical SAM superfamily. Lipoyl synthase family. [4Fe-4S] cluster is required as a cofactor.

It is found in the cytoplasm. It catalyses the reaction [[Fe-S] cluster scaffold protein carrying a second [4Fe-4S](2+) cluster] + N(6)-octanoyl-L-lysyl-[protein] + 2 oxidized [2Fe-2S]-[ferredoxin] + 2 S-adenosyl-L-methionine + 4 H(+) = [[Fe-S] cluster scaffold protein] + N(6)-[(R)-dihydrolipoyl]-L-lysyl-[protein] + 4 Fe(3+) + 2 hydrogen sulfide + 2 5'-deoxyadenosine + 2 L-methionine + 2 reduced [2Fe-2S]-[ferredoxin]. It participates in protein modification; protein lipoylation via endogenous pathway; protein N(6)-(lipoyl)lysine from octanoyl-[acyl-carrier-protein]: step 2/2. Functionally, catalyzes the radical-mediated insertion of two sulfur atoms into the C-6 and C-8 positions of the octanoyl moiety bound to the lipoyl domains of lipoate-dependent enzymes, thereby converting the octanoylated domains into lipoylated derivatives. This is Lipoyl synthase 1 from Bradyrhizobium diazoefficiens (strain JCM 10833 / BCRC 13528 / IAM 13628 / NBRC 14792 / USDA 110).